The chain runs to 307 residues: MLKGRNLLDPMDFSLEELEEVFKLADEIIEEPEKFLHVCDGKILATLFYEPSTRTRFSFEAAMLRLGGQVIGFSEPNSSSVAKGESVADTIRTVGCYADIAAMRHPKEGAPAIAAMYSDIPVINAGDGSHQHPTQTLTDLLTIRSLKGDLSNLTIGCCGDLKFGRTVHSLVKALSRYKNNKFVFMSPEELKIPDYIRKEILEKNNIEYKEISKMEDAMAELDILYMTRVQRERFFNEDDYVRLKDSYILDGEKMKYAKKDMMVLHPLPRVNEIAYEIDQDPRGCYFKQAKYGMYVRMALIAKLLGVR.

Residues Arg54 and Thr55 each contribute to the carbamoyl phosphate site. Lys83 is a binding site for L-aspartate. Carbamoyl phosphate-binding residues include Arg104, His132, and Gln135. L-aspartate contacts are provided by Arg165 and Arg228. Residues Leu267 and Pro268 each coordinate carbamoyl phosphate.

It belongs to the aspartate/ornithine carbamoyltransferase superfamily. ATCase family. In terms of assembly, heterododecamer (2C3:3R2) of six catalytic PyrB chains organized as two trimers (C3), and six regulatory PyrI chains organized as three dimers (R2).

It catalyses the reaction carbamoyl phosphate + L-aspartate = N-carbamoyl-L-aspartate + phosphate + H(+). It participates in pyrimidine metabolism; UMP biosynthesis via de novo pathway; (S)-dihydroorotate from bicarbonate: step 2/3. In terms of biological role, catalyzes the condensation of carbamoyl phosphate and aspartate to form carbamoyl aspartate and inorganic phosphate, the committed step in the de novo pyrimidine nucleotide biosynthesis pathway. In Clostridium botulinum (strain ATCC 19397 / Type A), this protein is Aspartate carbamoyltransferase catalytic subunit.